A 412-amino-acid chain; its full sequence is Sulfhydrogenase 2 subunit alpha (412 aa).

Ni(2+) is bound by residues Cys-60, Cys-63, Cys-402, and Cys-405. Cys-63 serves as a coordination point for Fe cation. Cys-405 is a Fe cation binding site.

Belongs to the [NiFe]/[NiFeSe] hydrogenase large subunit family. Dimer of heterotetramer of alpha, beta, gamma and delta subunits. The nickel-containing alpha and delta subunits constitute the hydrogenase activity. The beta and gamma subunits (flavin-containing dimer) constitute the sulfur reductase activity. Ni(2+) serves as cofactor. It depends on Fe cation as a cofactor.

It is found in the cytoplasm. It carries out the reaction H2 + NADP(+) = NADPH + H(+). It catalyses the reaction H2 + NAD(+) = NADH + H(+). Its function is as follows. Part of a bifunctional enzyme complex that functions as a hydrogen-evolving hydrogenase with sulfur-reducing activity. May play a role in hydrogen cycling during fermentative growth. Activity exhibited with NAD in addition to NADPH. The alpha and delta subunits form the hydrogenase component that catalyzes the reduction of protons to evolve hydrogen. The chain is Sulfhydrogenase 2 subunit alpha from Pyrococcus furiosus (strain ATCC 43587 / DSM 3638 / JCM 8422 / Vc1).